A 120-amino-acid chain; its full sequence is ATP-dependent Clp protease adapter protein ClpS (120 aa).

A disordered region spans residues 1 to 20; that stretch reads MATKSPVNPKVPLVQEPDRD.

This sequence belongs to the ClpS family. Binds to the N-terminal domain of the chaperone ClpA.

Involved in the modulation of the specificity of the ClpAP-mediated ATP-dependent protein degradation. The sequence is that of ATP-dependent Clp protease adapter protein ClpS from Albidiferax ferrireducens (strain ATCC BAA-621 / DSM 15236 / T118) (Rhodoferax ferrireducens).